The following is a 370-amino-acid chain: tRNA 2-selenouridine synthase (370 aa).

A Rhodanese domain is found at 12 to 136 (FLEDVPMMDT…MRNFLLDTTR (125 aa)). Catalysis depends on cysteine 95, which acts as the S-selanylcysteine intermediate.

It belongs to the SelU family. In terms of assembly, monomer.

It carries out the reaction 5-methylaminomethyl-2-thiouridine(34) in tRNA + selenophosphate + (2E)-geranyl diphosphate + H2O + H(+) = 5-methylaminomethyl-2-selenouridine(34) in tRNA + (2E)-thiogeraniol + phosphate + diphosphate. It catalyses the reaction 5-methylaminomethyl-2-thiouridine(34) in tRNA + (2E)-geranyl diphosphate = 5-methylaminomethyl-S-(2E)-geranyl-thiouridine(34) in tRNA + diphosphate. The enzyme catalyses 5-methylaminomethyl-S-(2E)-geranyl-thiouridine(34) in tRNA + selenophosphate + H(+) = 5-methylaminomethyl-2-(Se-phospho)selenouridine(34) in tRNA + (2E)-thiogeraniol. The catalysed reaction is 5-methylaminomethyl-2-(Se-phospho)selenouridine(34) in tRNA + H2O = 5-methylaminomethyl-2-selenouridine(34) in tRNA + phosphate. Involved in the post-transcriptional modification of the uridine at the wobble position (U34) of tRNA(Lys), tRNA(Glu) and tRNA(Gln). Catalyzes the conversion of 2-thiouridine (S2U-RNA) to 2-selenouridine (Se2U-RNA). Acts in a two-step process involving geranylation of 2-thiouridine (S2U) to S-geranyl-2-thiouridine (geS2U) and subsequent selenation of the latter derivative to 2-selenouridine (Se2U) in the tRNA chain. The protein is tRNA 2-selenouridine synthase of Azotobacter vinelandii (strain DJ / ATCC BAA-1303).